A 429-amino-acid polypeptide reads, in one-letter code: Probable imidazolonepropionase (429 aa).

4-imidazolone-5-propanoate contacts are provided by tyrosine 161 and histidine 194. Tyrosine 161 serves as a coordination point for N-formimidoyl-L-glutamate. Histidine 262 is a binding site for Fe(3+). Histidine 262 contributes to the Zn(2+) binding site. Glutamate 265 is a binding site for 4-imidazolone-5-propanoate. A Fe(3+)-binding site is contributed by aspartate 336. Residue aspartate 336 coordinates Zn(2+). Residue asparagine 338 participates in N-formimidoyl-L-glutamate binding.

Belongs to the metallo-dependent hydrolases superfamily. HutI family. Requires Zn(2+) as cofactor. The cofactor is Fe(3+).

The catalysed reaction is 4-imidazolone-5-propanoate + H2O = N-formimidoyl-L-glutamate. The protein operates within amino-acid degradation; L-histidine degradation into L-glutamate; N-formimidoyl-L-glutamate from L-histidine: step 3/3. This is Probable imidazolonepropionase (amdhd1) from Nematostella vectensis (Starlet sea anemone).